The sequence spans 129 residues: Large ribosomal subunit protein bL12 (129 aa).

This sequence belongs to the bacterial ribosomal protein bL12 family. Homodimer. Part of the ribosomal stalk of the 50S ribosomal subunit. Forms a multimeric L10(L12)X complex, where L10 forms an elongated spine to which 2 to 4 L12 dimers bind in a sequential fashion. Binds GTP-bound translation factors.

Forms part of the ribosomal stalk which helps the ribosome interact with GTP-bound translation factors. Is thus essential for accurate translation. This Treponema pallidum (strain Nichols) protein is Large ribosomal subunit protein bL12.